The chain runs to 496 residues: COP9 signalosome complex subunit 3 (496 aa).

Residues 243 to 411 (QASHCLGIVI…GNETTTMLRF (169 aa)) enclose the PCI domain. The interval 468–496 (GSSERSGVVGSTEADGGGDLDEDLMGDGR) is disordered. Residues 483 to 496 (GGGDLDEDLMGDGR) show a composition bias toward acidic residues.

The protein belongs to the CSN3 family. In terms of assembly, component of the COP9 signalosome (CSN) complex.

It is found in the cytoplasm. The protein resides in the nucleus. Functionally, component of the COP9 signalosome (CSN) complex that acts as an regulator of the ubiquitin (Ubl) conjugation pathway by mediating the deneddylation of the cullin subunit of SCF-type E3 ubiquitin-protein ligase complexes. The CSN complex seems to link protein degradation to sexual development. This is COP9 signalosome complex subunit 3 (csnC) from Emericella nidulans (strain FGSC A4 / ATCC 38163 / CBS 112.46 / NRRL 194 / M139) (Aspergillus nidulans).